Here is a 115-residue protein sequence, read N- to C-terminus: SGSCTSQVCWNAMPKLRQISEALLKSHIQAYHMMYSKRSLKLRPLQERNRNPSKTDIVYLTPDYCEPNKRHGSLGTHGRRCNKTSTGVNGCRLMCCGRGYQTMLRHVTESCHCRF.

Residue Ser1 is the site of O-palmitoleoyl serine; by PORCN attachment. Cys81 and Cys96 form a disulfide bridge. An N-linked (GlcNAc...) asparagine glycan is attached at Asn82.

The protein belongs to the Wnt family. Post-translationally, palmitoleoylation is required for efficient binding to frizzled receptors. Depalmitoleoylation leads to Wnt signaling pathway inhibition.

It localises to the secreted. It is found in the extracellular space. The protein localises to the extracellular matrix. Functionally, ligand for members of the frizzled family of seven transmembrane receptors. Probable developmental protein. May be a signaling molecule which affects the development of discrete regions of tissues. Is likely to signal over only few cell diameters. This is Protein Wnt-2 (WNT-2) from Strongylocentrotus purpuratus (Purple sea urchin).